The sequence spans 73 residues: UPF0154 protein LJ_1506 (73 aa).

The helical transmembrane segment at 3–23 threads the bilayer; that stretch reads LGLAIFLIIIALLIGLVGGFY.

It belongs to the UPF0154 family.

Its subcellular location is the cell membrane. This Lactobacillus johnsonii (strain CNCM I-12250 / La1 / NCC 533) protein is UPF0154 protein LJ_1506.